Reading from the N-terminus, the 193-residue chain is NADH-ubiquinone oxidoreductase chain 2 (193 aa).

5 helical membrane-spanning segments follow: residues 18–38 (FYST…KLGA), 39–59 (IFFL…FFLF), 83–103 (FFVL…GFFL), 116–138 (NLAF…LSTV), and 161–181 (LSFL…FFFL).

The protein localises to the mitochondrion inner membrane. The enzyme catalyses a ubiquinone + NADH + 5 H(+)(in) = a ubiquinol + NAD(+) + 4 H(+)(out). Core subunit of the mitochondrial membrane respiratory chain NADH dehydrogenase (Complex I) that is believed to belong to the minimal assembly required for catalysis. Complex I functions in the transfer of electrons from NADH to the respiratory chain. The immediate electron acceptor for the enzyme is believed to be ubiquinone. In Paramecium tetraurelia, this protein is NADH-ubiquinone oxidoreductase chain 2 (ND2).